Reading from the N-terminus, the 407-residue chain is E3 ubiquitin-protein ligase TRIM13 (407 aa).

The RING-type zinc-finger motif lies at 10–58 (CPICCSLFDDPRVLPCSHNFCKKCLEGILEGNVRNSLWRSSPFKCPTCR). The B box-type zinc-finger motif lies at 89–131 (PKMPVCKGHLGQPLNIFCLTDMQLICGICATRGEHTKHVFCSI). Zn(2+)-binding residues include Cys-94, His-97, Cys-117, and His-123. Residues 172 to 200 (LQLLTKDSDKVKEFFEKLQYTLDQKKNEI) are a coiled coil. The helical transmembrane segment at 316–336 (PLFVVVILLGLLIFFSPTMFL) threads the bilayer.

In terms of assembly, interacts (via C-terminal domain) with VCP. Interacts with AKT1; the interaction ubiquitinates AKT1 and leads to its proteasomal degradation. Interacts with MDM2; the interaction ubiquitinates AKT1 and leads to its proteasomal degradation. Interacts with p62/SQSTM1. Interacts with TRAF6. Interacts with IKBKG/NEMO. In terms of processing, auto-ubiquitinated; requires the RING-type zinc finger. Auto-polyubiquitination leads to proteasomal degradation.

It is found in the endoplasmic reticulum membrane. It carries out the reaction S-ubiquitinyl-[E2 ubiquitin-conjugating enzyme]-L-cysteine + [acceptor protein]-L-lysine = [E2 ubiquitin-conjugating enzyme]-L-cysteine + N(6)-ubiquitinyl-[acceptor protein]-L-lysine.. It functions in the pathway protein modification; protein ubiquitination. Functionally, endoplasmic reticulum (ER) membrane anchored E3 ligase involved in the retrotranslocation and turnover of membrane and secretory proteins from the ER through a set of processes named ER-associated degradation (ERAD). This process acts on misfolded proteins as well as in the regulated degradation of correctly folded proteins. Enhances ionizing radiation-induced p53/TP53 stability and apoptosis via ubiquitinating MDM2 and AKT1 and decreasing AKT1 kinase activity through MDM2 and AKT1 proteasomal degradation. Regulates ER stress-induced autophagy, and may act as a tumor suppressor. Also plays a role in innate immune response by stimulating NF-kappa-B activity in the TLR2 signaling pathway. Ubiquitinates TRAF6 via the 'Lys-29'-linked polyubiquitination chain resulting in NF-kappa-B activation. Participates as well in T-cell receptor-mediated NF-kappa-B activation. In the presence of TNF, modulates the IKK complex by regulating IKBKG/NEMO ubiquitination leading to the repression of NF-kappa-B. The chain is E3 ubiquitin-protein ligase TRIM13 (TRIM13) from Bos taurus (Bovine).